The following is a 352-amino-acid chain: UDP-N-acetylglucosamine--N-acetylmuramyl-(pentapeptide) pyrophosphoryl-undecaprenol N-acetylglucosamine transferase (352 aa).

UDP-N-acetyl-alpha-D-glucosamine is bound by residues Ser195 and Gln287.

The protein belongs to the glycosyltransferase 28 family. MurG subfamily.

Its subcellular location is the cell membrane. It carries out the reaction Mur2Ac(oyl-L-Ala-gamma-D-Glu-L-Lys-D-Ala-D-Ala)-di-trans,octa-cis-undecaprenyl diphosphate + UDP-N-acetyl-alpha-D-glucosamine = beta-D-GlcNAc-(1-&gt;4)-Mur2Ac(oyl-L-Ala-gamma-D-Glu-L-Lys-D-Ala-D-Ala)-di-trans,octa-cis-undecaprenyl diphosphate + UDP + H(+). Its pathway is cell wall biogenesis; peptidoglycan biosynthesis. Functionally, cell wall formation. Catalyzes the transfer of a GlcNAc subunit on undecaprenyl-pyrophosphoryl-MurNAc-pentapeptide (lipid intermediate I) to form undecaprenyl-pyrophosphoryl-MurNAc-(pentapeptide)GlcNAc (lipid intermediate II). The protein is UDP-N-acetylglucosamine--N-acetylmuramyl-(pentapeptide) pyrophosphoryl-undecaprenol N-acetylglucosamine transferase of Streptococcus pneumoniae (strain CGSP14).